The primary structure comprises 247 residues: Probable transcriptional regulatory protein YebC (247 aa).

A disordered region spans residues M1 to K20.

Belongs to the TACO1 family.

It is found in the cytoplasm. The polypeptide is Probable transcriptional regulatory protein YebC (Salmonella arizonae (strain ATCC BAA-731 / CDC346-86 / RSK2980)).